The chain runs to 1199 residues: MVRLLLIFFPMIFLEMSILPRMPDRKVLLAGASSQRSVARMDGDVIIGALFSVHHQPPAEKVPERKCGEIREQYGIQRVEAMFHTLDKINADPVLLPNITLGSEIRDSCWHSSVALEQSIEFIRDSLISIRDEKDGLNRCLPDGQTLPPGRTKKPIAGVIGPGSSSVAIQVQNLLQLFDIPQIAYSATSIDLSDKTLYKYFLRVVPSDTLQARAMLDIVKRYNWTYVSAVHTEGNYGESGMDAFKELAAQEGLCIAHSDKIYSNAGEKSFDRLLRKLRERLPKARVVVCFCEGMTVRGLLSAMRRLGVVGEFSLIGSDGWADRDEVIEGYEVEANGGITIKLQSPEVRSFDDYFLKLRLDTNTRNPWFPEFWQHRFQCRLPGHLLENPNFKKVCTGNESLEENYVQDSKMGFVINAIYAMAHGLQNMHHALCPGYVGLCDAMKPIDGRKLLDFLIKSSFVGVSGEEVWFDEKGDAPGRYDIMNLQYTEANRYDYVHVGTWHEGVLNIDDYKIQMNKSGMVRSVCSEPCLKGQIKVIRKGEVSCCWICTACKENEFVQDEFTCRACDLGWWPNAELTGCEPITIRYLEWSDIESIIAIAFSCLGILVTLFVTLIFVLYRDTPVVKSSSRELCYIILAGIFLGYVCPFTLIAKPTTTSCYLQRLLVGLSSAMCYSALVTKTNRIARILAGSKKKICTRKPRFMSAWAQVIIASILISVQLTLVVTLIIMEPPMPILSYPSIKEVYLICNTSNLGVVAPVGYNGLLIMSCTYYAFKTRNVPANFNEAKYIAFTMYTTCIIWLAFVPIYFGSNYKIITTCFAVSLSVTVALGCMFTPKMYIIIAKPERNVRSAFTTSDVVRMHVGDGKLPCRSNTFLNIFRRKKPGAGNANSNGKSVSWSEPGGRQAPKGQHVWQRLSVHVKTNETACNQTAVIKPLTKSYQGSGKSLTFSDASTKTLYNVEEEDNTPSTHFSPPSSPSMVVHRRGPPVATTPPLPPHLSAEETPLFLADSVIPKGLPPPLPQQQQQPPPQPPPQQPKSLMDQLQGVVTNFGSGIPDFHAVLAGPGTPGNGLRSLYPPPPPPQHLQMLPLQLSTFREEPISPPGEDDDDDSSERFKLLQEFVYEREGNTEEDDLEEEEDLPAASKLTPEDSPALTPPSPFRDSVASGSSVPSSPVSESVLCTPPNVTYASVILRDYKQSSSTL.

Residues 1–20 (MVRLLLIFFPMIFLEMSILP) form the signal peptide. Over 21 to 592 (RMPDRKVLLA…IRYLEWSDIE (572 aa)) the chain is Extracellular. A disulfide bond links Cys67 and Cys109. Tyr74 serves as a coordination point for L-glutamate. Asn98 is a glycosylation site (N-linked (GlcNAc...) asparagine). Residues Ser165 and 186–188 (SAT) each bind L-glutamate. An N-linked (GlcNAc...) asparagine glycan is attached at Asn223. L-glutamate is bound at residue Tyr236. The cysteines at positions 289 and 291 are disulfide-linked. L-glutamate is bound at residue Asp318. Cys378 and Cys394 are oxidised to a cystine. Asn397 carries N-linked (GlcNAc...) asparagine glycosylation. Position 409 (Lys409) interacts with L-glutamate. Cys432 and Cys439 are oxidised to a cystine. A glycan (N-linked (GlcNAc...) asparagine) is linked at Asn515. A helical membrane pass occupies residues 593 to 615 (SIIAIAFSCLGILVTLFVTLIFV). Over 616–629 (LYRDTPVVKSSSRE) the chain is Cytoplasmic. A helical transmembrane segment spans residues 630–650 (LCYIILAGIFLGYVCPFTLIA). Residues 651-658 (KPTTTSCY) are Extracellular-facing. Cysteines 657 and 746 form a disulfide. A helical membrane pass occupies residues 659-680 (LQRLLVGLSSAMCYSALVTKTN). Over 681–703 (RIARILAGSKKKICTRKPRFMSA) the chain is Cytoplasmic. A helical membrane pass occupies residues 704-727 (WAQVIIASILISVQLTLVVTLIIM). Residues 728–750 (EPPMPILSYPSIKEVYLICNTSN) lie on the Extracellular side of the membrane. An N-linked (GlcNAc...) asparagine glycan is attached at Asn747. Residues 751–772 (LGVVAPVGYNGLLIMSCTYYAF) traverse the membrane as a helical segment. Residues 773 to 785 (KTRNVPANFNEAK) lie on the Cytoplasmic side of the membrane. The helical transmembrane segment at 786-807 (YIAFTMYTTCIIWLAFVPIYFG) threads the bilayer. The Extracellular portion of the chain corresponds to 808-815 (SNYKIITT). Residues 816–840 (CFAVSLSVTVALGCMFTPKMYIIIA) traverse the membrane as a helical segment. At 841–1199 (KPERNVRSAF…RDYKQSSSTL (359 aa)) the chain is on the cytoplasmic side. Position 853 is a phosphoserine (Ser853). Thr871 carries the post-translational modification Phosphothreonine. 3 disordered regions span residues 882 to 906 (GAGNANSNGKSVSWSEPGGRQAPKG), 959 to 1035 (EEDN…QPKS), and 1055 to 1082 (HAVLAGPGTPGNGLRSLYPPPPPPQHLQ). Residues 885 to 895 (NANSNGKSVSW) show a composition bias toward polar residues. A phosphoserine mark is found at Ser894 and Ser969. The segment covering 1012–1032 (GLPPPLPQQQQQPPPQPPPQQ) has biased composition (pro residues). Ser1097 is modified (phosphoserine). Residues 1118-1177 (VYEREGNTEEDDLEEEEDLPAASKLTPEDSPALTPPSPFRDSVASGSSVPSSPVSESVLC) are disordered. A compositionally biased stretch (acidic residues) spans 1125-1136 (TEEDDLEEEEDL). Ser1147 bears the Phosphoserine mark. The residue at position 1151 (Thr1151) is a Phosphothreonine. Ser1154 carries the post-translational modification Phosphoserine. Residues 1159–1175 (SVASGSSVPSSPVSESV) show a composition bias toward low complexity.

The protein belongs to the G-protein coupled receptor 3 family. Homodimer; disulfide-linked. The PPXXF motif binds HOMER1, HOMER2 and HOMER3. Interacts with TAMALIN. Interacts with RYR1, RYR2, ITPR1, SHANK1 and SHANK3. Interacts with SHIA1. As to expression, expressed in the striatum (at protein level). Expressed in type II unipolar brush cells of the cerebellum (at protein level).

The protein resides in the cell membrane. Its subcellular location is the postsynaptic cell membrane. It is found in the cell projection. It localises to the dendrite. Functionally, G-protein coupled receptor for glutamate. Ligand binding causes a conformation change that triggers signaling via guanine nucleotide-binding proteins (G proteins) and modulates the activity of down-stream effectors. Signaling activates a phosphatidylinositol-calcium second messenger system. May participate in the central action of glutamate in the CNS, such as long-term potentiation in the hippocampus and long-term depression in the cerebellum (By. similarity). May function in the light response in the retina. Induces GRID1 and GRID2 cation-channel activation via GNAQ-PLC-PKC pathway in dopaminergic neurons and cerebellar Purkinje cell, respectively. The sequence is that of Metabotropic glutamate receptor 1 (Grm1) from Mus musculus (Mouse).